The following is a 624-amino-acid chain: Hemocyanin E chain (624 aa).

Residues H169, H173, H200, H320, H324, and H360 each coordinate Cu cation. Residue N445 is glycosylated (N-linked (GlcNAc...) asparagine). C529 and C577 form a disulfide bridge.

Belongs to the tyrosinase family. Hemocyanin subfamily. Tarantula hemocyanin is a 24-chain polymer with seven different chains identified. As to expression, hemolymph.

Its subcellular location is the secreted. The protein resides in the extracellular space. Its function is as follows. Hemocyanins are copper-containing oxygen carriers occurring freely dissolved in the hemolymph of many mollusks and arthropods. In Aphonopelma sp. (American tarantula), this protein is Hemocyanin E chain (HCE).